A 150-amino-acid polypeptide reads, in one-letter code: UPF0178 protein ASA_3749 (150 aa).

This sequence belongs to the UPF0178 family.

The protein is UPF0178 protein ASA_3749 of Aeromonas salmonicida (strain A449).